The chain runs to 151 residues: Methylated-DNA--protein-cysteine methyltransferase (151 aa).

Cys-119 (nucleophile; methyl group acceptor) is an active-site residue.

The protein belongs to the MGMT family.

It localises to the cytoplasm. The enzyme catalyses a 6-O-methyl-2'-deoxyguanosine in DNA + L-cysteinyl-[protein] = S-methyl-L-cysteinyl-[protein] + a 2'-deoxyguanosine in DNA. It catalyses the reaction a 4-O-methyl-thymidine in DNA + L-cysteinyl-[protein] = a thymidine in DNA + S-methyl-L-cysteinyl-[protein]. Functionally, involved in the cellular defense against the biological effects of O6-methylguanine (O6-MeG) and O4-methylthymine (O4-MeT) in DNA. Repairs the methylated nucleobase in DNA by stoichiometrically transferring the methyl group to a cysteine residue in the enzyme. This is a suicide reaction: the enzyme is irreversibly inactivated. This chain is Methylated-DNA--protein-cysteine methyltransferase, found in Saccharolobus islandicus (strain L.S.2.15 / Lassen #1) (Sulfolobus islandicus).